A 935-amino-acid chain; its full sequence is C-1-tetrahydrofolate synthase, cytoplasmic (935 aa).

The residue at position 1 (M1) is an N-acetylmethionine. Residues 2-291 are methylenetetrahydrofolate dehydrogenase and methenyltetrahydrofolate cyclohydrolase (D/C) domain; sequence APAGILNGKV…MLMQSTVESA (290 aa). Substrate is bound by residues 52–56 and 99–101; these read YINVK and VQL. K56 is a catalytic residue. Residues 172–174 and S197 contribute to the NADP(+) site; that span reads GRS. 272–276 lines the substrate pocket; sequence PGGVG. Positions 310–935 are formyltetrahydrofolate synthetase domain; it reads LNLKTPVPSD…PETEQVNGLF (626 aa). S318 is modified (phosphoserine). Residue 380–387 coordinates ATP; the sequence is TPLGEGKS. 2 positions are modified to phosphoserine: S413 and S490.

It in the N-terminal section; belongs to the tetrahydrofolate dehydrogenase/cyclohydrolase family. In the C-terminal section; belongs to the formate--tetrahydrofolate ligase family. As to quaternary structure, homodimer.

Its subcellular location is the cytoplasm. It carries out the reaction (6R)-5,10-methylene-5,6,7,8-tetrahydrofolate + NADP(+) = (6R)-5,10-methenyltetrahydrofolate + NADPH. The catalysed reaction is (6R)-5,10-methenyltetrahydrofolate + H2O = (6R)-10-formyltetrahydrofolate + H(+). The enzyme catalyses (6S)-5,6,7,8-tetrahydrofolate + formate + ATP = (6R)-10-formyltetrahydrofolate + ADP + phosphate. It participates in one-carbon metabolism; tetrahydrofolate interconversion. In terms of biological role, trifunctional enzyme that catalyzes the interconversion of three forms of one-carbon-substituted tetrahydrofolate: (6R)-5,10-methylene-5,6,7,8-tetrahydrofolate, 5,10-methenyltetrahydrofolate and (6S)-10-formyltetrahydrofolate. These derivatives of tetrahydrofolate are differentially required in nucleotide and amino acid biosynthesis, (6S)-10-formyltetrahydrofolate being required for purine biosynthesis while (6R)-5,10-methylene-5,6,7,8-tetrahydrofolate is used for serine and methionine biosynthesis for instance. This chain is C-1-tetrahydrofolate synthase, cytoplasmic (Mthfd1), found in Rattus norvegicus (Rat).